We begin with the raw amino-acid sequence, 700 residues long: Elongation factor G (700 aa).

Positions 8–290 (ERYRNIGISA…AVIDYLPAPT (283 aa)) constitute a tr-type G domain. GTP is bound by residues 17–24 (AHIDAGKT), 88–92 (DTPGH), and 142–145 (NKMD).

Belongs to the TRAFAC class translation factor GTPase superfamily. Classic translation factor GTPase family. EF-G/EF-2 subfamily.

It localises to the cytoplasm. Its function is as follows. Catalyzes the GTP-dependent ribosomal translocation step during translation elongation. During this step, the ribosome changes from the pre-translocational (PRE) to the post-translocational (POST) state as the newly formed A-site-bound peptidyl-tRNA and P-site-bound deacylated tRNA move to the P and E sites, respectively. Catalyzes the coordinated movement of the two tRNA molecules, the mRNA and conformational changes in the ribosome. In Pasteurella multocida (strain Pm70), this protein is Elongation factor G (fusA).